The following is a 158-amino-acid chain: RING-H2 finger protein ATL66 (158 aa).

A helical membrane pass occupies residues 33–53 (LFFALALFSVVLFFALLTLYI). An RING-type; atypical zinc finger spans residues 107-149 (CCICLGGFEEGEKMKVLPPCSHCYHCECVDRWLKTESSCPLCR).

This sequence belongs to the RING-type zinc finger family. ATL subfamily.

The protein resides in the membrane. It catalyses the reaction S-ubiquitinyl-[E2 ubiquitin-conjugating enzyme]-L-cysteine + [acceptor protein]-L-lysine = [E2 ubiquitin-conjugating enzyme]-L-cysteine + N(6)-ubiquitinyl-[acceptor protein]-L-lysine.. The protein operates within protein modification; protein ubiquitination. The chain is RING-H2 finger protein ATL66 (ATL66) from Arabidopsis thaliana (Mouse-ear cress).